A 332-amino-acid polypeptide reads, in one-letter code: 5-dehydro-2-deoxygluconokinase 2 (332 aa).

The protein belongs to the carbohydrate kinase PfkB family.

The enzyme catalyses 5-dehydro-2-deoxy-D-gluconate + ATP = 6-phospho-5-dehydro-2-deoxy-D-gluconate + ADP + H(+). It functions in the pathway polyol metabolism; myo-inositol degradation into acetyl-CoA; acetyl-CoA from myo-inositol: step 5/7. Functionally, catalyzes the phosphorylation of 5-dehydro-2-deoxy-D-gluconate (2-deoxy-5-keto-D-gluconate or DKG) to 6-phospho-5-dehydro-2-deoxy-D-gluconate (DKGP). The sequence is that of 5-dehydro-2-deoxygluconokinase 2 from Bacillus cereus (strain ZK / E33L).